The chain runs to 81 residues: MSHIVKIYDTCIGCTQCVRACPLDVLEMVPWDGCKAEQMASAPRTEDCVGCKRCESACPTDFLSVRVYTSSESTRSMGLAY.

2 4Fe-4S ferredoxin-type domains span residues 2-31 (SHIV…MVPW) and 39-68 (MASA…VRVY). Residues Cys11, Cys14, Cys17, Cys21, Cys48, Cys51, Cys54, and Cys58 each contribute to the [4Fe-4S] cluster site.

The eukaryotic PSI reaction center is composed of at least 11 subunits. The cofactor is [4Fe-4S] cluster.

It is found in the plastid. The protein resides in the chloroplast thylakoid membrane. It catalyses the reaction reduced [plastocyanin] + hnu + oxidized [2Fe-2S]-[ferredoxin] = oxidized [plastocyanin] + reduced [2Fe-2S]-[ferredoxin]. Apoprotein for the two 4Fe-4S centers FA and FB of photosystem I (PSI); essential for photochemical activity. FB is the terminal electron acceptor of PSI, donating electrons to ferredoxin. The C-terminus interacts with PsaA/B/D and helps assemble the protein into the PSI complex. Required for binding of PsaD and PsaE to PSI. PSI is a plastocyanin/cytochrome c6-ferredoxin oxidoreductase, converting photonic excitation into a charge separation, which transfers an electron from the donor P700 chlorophyll pair to the spectroscopically characterized acceptors A0, A1, FX, FA and FB in turn. This chain is Photosystem I iron-sulfur center, found in Stigeoclonium helveticum (Green alga).